Reading from the N-terminus, the 192-residue chain is Peptidyl-tRNA hydrolase (192 aa).

Tyr17 contacts tRNA. The Proton acceptor role is filled by His22. Residues Tyr68, Asn70, and Asn116 each coordinate tRNA.

The protein belongs to the PTH family. As to quaternary structure, monomer.

It localises to the cytoplasm. The catalysed reaction is an N-acyl-L-alpha-aminoacyl-tRNA + H2O = an N-acyl-L-amino acid + a tRNA + H(+). Functionally, hydrolyzes ribosome-free peptidyl-tRNAs (with 1 or more amino acids incorporated), which drop off the ribosome during protein synthesis, or as a result of ribosome stalling. Its function is as follows. Catalyzes the release of premature peptidyl moieties from peptidyl-tRNA molecules trapped in stalled 50S ribosomal subunits, and thus maintains levels of free tRNAs and 50S ribosomes. This is Peptidyl-tRNA hydrolase from Mycobacterium sp. (strain JLS).